A 185-amino-acid chain; its full sequence is Ribosome-recycling factor (185 aa).

The protein belongs to the RRF family.

Its subcellular location is the cytoplasm. Its function is as follows. Responsible for the release of ribosomes from messenger RNA at the termination of protein biosynthesis. May increase the efficiency of translation by recycling ribosomes from one round of translation to another. The protein is Ribosome-recycling factor of Pseudomonas paraeruginosa (strain DSM 24068 / PA7) (Pseudomonas aeruginosa (strain PA7)).